The following is a 494-amino-acid chain: Ribose import ATP-binding protein RbsA (494 aa).

2 consecutive ABC transporter domains span residues 3 to 240 and 250 to 494; these read IEMK…VGRS and SQIS…TGGE. 35–42 contacts ATP; sequence GENGAGKS.

It belongs to the ABC transporter superfamily. Ribose importer (TC 3.A.1.2.1) family. In terms of assembly, the complex is composed of an ATP-binding protein (RbsA), two transmembrane proteins (RbsC) and a solute-binding protein (RbsB).

Its subcellular location is the cell membrane. The catalysed reaction is D-ribose(out) + ATP + H2O = D-ribose(in) + ADP + phosphate + H(+). In terms of biological role, part of the ABC transporter complex RbsABC involved in ribose import. Responsible for energy coupling to the transport system. The polypeptide is Ribose import ATP-binding protein RbsA (Bacillus cereus (strain ZK / E33L)).